The following is a 266-amino-acid chain: UPF0354 protein LMHCC_0955 (266 aa).

This sequence belongs to the UPF0354 family.

The sequence is that of UPF0354 protein LMHCC_0955 from Listeria monocytogenes serotype 4a (strain HCC23).